We begin with the raw amino-acid sequence, 530 residues long: GATA zinc finger domain-containing protein 4 (530 aa).

2 disordered regions span residues 1–27 and 212–386; these read MSINHFNNNKNNNNKNNKNNEENFWDN and STVV…INNN. 3 stretches are compositionally biased toward low complexity: residues 7–17, 216–290, and 299–386; these read NNNKNNNNKNN, SNSP…FNNN, and NSNN…INNN. The segment at 494 to 518 adopts a GATA-type zinc-finger fold; that stretch reads CSMCNIKESISWIKTMVNGQLCNAC.

This is GATA zinc finger domain-containing protein 4 (gtaD) from Dictyostelium discoideum (Social amoeba).